A 390-amino-acid polypeptide reads, in one-letter code: Two-component response regulator ORR29 (390 aa).

Positions 13–130 constitute a Response regulatory domain; it reads SAMVIDEDKC…TIKNLWQYVD (118 aa). Asp-65 carries the post-translational modification 4-aspartylphosphate. Residues 169–226 constitute a DNA-binding region (myb-like GARP); sequence KKYYLMWTPHLQKKFLHALQILGKDASPKNIKKIMGVDNIDCRQIAAHLQKHRLRLTK. Disordered regions lie at residues 233–271 and 303–339; these read FTTD…QPTE and SKHS…SGDH. Polar residues predominate over residues 257–271; the sequence is NASTLQPRSNTQPTE.

The protein belongs to the ARR family. Type-B subfamily. Post-translationally, two-component system major event consists of a His-to-Asp phosphorelay between a sensor histidine kinase (HK) and a response regulator (RR). In plants, the His-to-Asp phosphorelay involves an additional intermediate named Histidine-containing phosphotransfer protein (HPt). This multistep phosphorelay consists of a His-Asp-His-Asp sequential transfer of a phosphate group between first a His and an Asp of the HK protein, followed by the transfer to a conserved His of the HPt protein and finally the transfer to an Asp in the receiver domain of the RR protein.

It is found in the nucleus. Its function is as follows. Transcriptional activator that binds specific DNA sequence. Functions as a response regulator involved in His-to-Asp phosphorelay signal transduction system. Phosphorylation of the Asp residue in the receiver domain activates the ability of the protein to promote the transcription of target genes. May directly activate some type-A response regulators in response to cytokinins. The sequence is that of Two-component response regulator ORR29 from Oryza sativa subsp. indica (Rice).